The primary structure comprises 255 residues: MAELRALVAVKRVIDFAVKIRVKPDRTGVVMDGVKHSMNPFCEIAVEEAVRLKEKKLVKEVIAVSCGPAQCQETIRTALAMGADRGIHVEVPAAEAHHLGPLQVARVLAKLAQKEKVDLVLLGKQAIDDDCNQTGQMTAGFLDWPQGTFASQVTLEGDKVKVEREIDGGLETLRLKLPAVVTADLRLNEPRYATLPNIMKAKKKKIEVIKAGDLGVDLTSKLSVVSVEDPPQRVAGVKVETTEDLVAKLREIGRI.

Ala-2 bears the N-acetylalanine mark. AMP contacts are provided by residues Ala-9, Asn-39 to Cys-42, Cys-66, and Gly-123 to Thr-134. A recognition loop region spans residues Ala-183–Lys-205. An N6,N6,N6-trimethyllysine; by ETFBKMT; alternate modification is found at Lys-200. Position 200 is an N6-acetyllysine; alternate (Lys-200). Lys-200 carries the N6-methyllysine; alternate modification. An N6,N6,N6-trimethyllysine; by ETFBKMT modification is found at Lys-203. At Lys-210 the chain carries N6-acetyllysine; alternate. Lys-210 is subject to N6-succinyllysine; alternate. Residues Ser-223 and Ser-226 each carry the phosphoserine modification. Lys-238 is subject to N6-acetyllysine. N6-acetyllysine; alternate is present on Lys-248. At Lys-248 the chain carries N6-succinyllysine; alternate.

The protein belongs to the ETF beta-subunit/FixA family. As to quaternary structure, heterodimer composed of ETFA and ETFB. Identified in a complex that contains ETFA, ETFB and ETFRF1. Interacts with ACADM. In terms of processing, methylated. Trimethylation at Lys-200 and Lys-203 may negatively regulate the activity in electron transfer from acyl-CoA dehydrogenases.

It localises to the mitochondrion matrix. In terms of biological role, heterodimeric electron transfer flavoprotein that accepts electrons from several mitochondrial dehydrogenases, including acyl-CoA dehydrogenases, glutaryl-CoA and sarcosine dehydrogenase. It transfers the electrons to the main mitochondrial respiratory chain via ETF-ubiquinone oxidoreductase. Required for normal mitochondrial fatty acid oxidation and normal amino acid metabolism. ETFB binds an AMP molecule that probably has a purely structural role. The sequence is that of Electron transfer flavoprotein subunit beta from Sus scrofa (Pig).